A 186-amino-acid chain; its full sequence is Biofilm operon icaADBC HTH-type negative transcriptional regulator IcaR (186 aa).

An HTH tetR-type domain is found at 1–59; it reads MKDKIIDNAITLFSEKGYDGTTLDDIAKSVNIKKASLYYHFDSKKSIYEQSVKCCFDYL. The H-T-H motif DNA-binding region spans 22 to 41; that stretch reads TLDDIAKSVNIKKASLYYHF.

Homodimer.

Represses transcription of the icaADBC operon necessary for biofilm production. This Staphylococcus aureus (strain NCTC 8325 / PS 47) protein is Biofilm operon icaADBC HTH-type negative transcriptional regulator IcaR (icaR).